The following is a 146-amino-acid chain: Large ribosomal subunit protein uL15 (146 aa).

Positions 1–13 (MKLHELKAAEGSR) are enriched in basic and acidic residues. The interval 1-61 (MKLHELKAAE…GGQTPLFRRM (61 aa)) is disordered. Composition is skewed to gly residues over residues 23-35 (TSSG…GRGQ) and 42-52 (SGGGVRLGFEG).

Belongs to the universal ribosomal protein uL15 family. As to quaternary structure, part of the 50S ribosomal subunit.

In terms of biological role, binds to the 23S rRNA. This is Large ribosomal subunit protein uL15 from Streptococcus uberis (strain ATCC BAA-854 / 0140J).